The following is a 492-amino-acid chain: Glycylpeptide N-tetradecanoyltransferase 2 (492 aa).

The tract at residues 1 to 77 (MAEDSESAAS…SASDSQEIKN (77 aa)) is disordered. Positions 15-32 (ELDDQDTCGIDGDNEEEN) are enriched in acidic residues. Residues 46 to 57 (KKKKKKQKRKKE) show a composition bias toward basic residues. Residues 61-72 (SGGTKSDSASDS) are compositionally biased toward polar residues. His111, Trp116, Leu244, Val246, Ser252, Arg254, Val255, and Ala256 together coordinate tetradecanoyl-CoA.

Belongs to the NMT family.

The protein localises to the cytoplasm. Its subcellular location is the membrane. The catalysed reaction is N-terminal glycyl-[protein] + tetradecanoyl-CoA = N-tetradecanoylglycyl-[protein] + CoA + H(+). It carries out the reaction N-terminal glycyl-L-lysyl-[protein] + tetradecanoyl-CoA = N-terminal glycyl-(N(6)-tetradecanoyl)-L-lysyl-[protein] + CoA + H(+). In terms of biological role, adds a myristoyl group to the N-terminal glycine residue of certain cellular and viral proteins. Also able to mediate N-terminal lysine myristoylation of proteins. This chain is Glycylpeptide N-tetradecanoyltransferase 2, found in Danio rerio (Zebrafish).